An 84-amino-acid polypeptide reads, in one-letter code: Toxin-like TcoNTxP1 (84 aa).

Residues 1 to 19 (MKRMILFTSCLLLIDIVVG) form the signal peptide. One can recognise an LCN-type CS-alpha/beta domain in the interval 21 to 82 (KEGYPADSKG…VWDSATNKCG (62 aa)). Intrachain disulfides connect Cys31–Cys81, Cys35–Cys57, Cys43–Cys62, and Cys47–Cys64. At Cys81 the chain carries Cysteine amide. Residues 82 to 84 (GKK) constitute a propeptide that is removed on maturation.

In terms of tissue distribution, expressed by the venom gland.

It is found in the secreted. Its function is as follows. This protein is not toxic. It induces an immune response similar to that induced by whole venom. Thus, polyclonal antibodies raised against this protein can neutralize the effects of the venom. In Tityus costatus (Brazilian scorpion), this protein is Toxin-like TcoNTxP1.